A 349-amino-acid polypeptide reads, in one-letter code: L-lactate dehydrogenase (349 aa).

The interval 199–219 (APEGSIIGADGNPTTDASTMF) is disordered.

Belongs to the LDH2/MDH2 oxidoreductase family.

Its subcellular location is the cytoplasm. It catalyses the reaction (S)-lactate + NAD(+) = pyruvate + NADH + H(+). It functions in the pathway fermentation; pyruvate fermentation to lactate; (S)-lactate from pyruvate: step 1/1. This chain is L-lactate dehydrogenase (ldh), found in Cupriavidus necator (strain ATCC 17699 / DSM 428 / KCTC 22496 / NCIMB 10442 / H16 / Stanier 337) (Ralstonia eutropha).